Reading from the N-terminus, the 86-residue chain is Stage V sporulation protein S (86 aa).

Functionally, interferes with sporulation at an early stage. Seems to play a positive role in allowing cells to progress beyond stage V of sporulation. The polypeptide is Stage V sporulation protein S (Bacillus subtilis (strain 168)).